The sequence spans 575 residues: uncharacterized protein (575 aa).

The next 6 helical transmembrane spans lie at 16–36, 50–70, 132–152, 154–174, 243–263, and 264–284; these read FFLD…FPLI, WGLI…SSAL, PEDL…MLFI, WQLA…ALYF, ISYM…TWFV, and IRGS…NVLF. The ABC transmembrane type-1 domain occupies 16-299; sequence FFLDFFSAIA…INAIIEMYPR (284 aa). Positions 333 to 567 constitute an ABC transporter domain; it reads IRYKHVSFGY…GGLYSRLHQA (235 aa). 366–373 provides a ligand contact to ATP; sequence GPSGAGKS.

It belongs to the ABC transporter superfamily.

It is found in the cell membrane. It localises to the membrane raft. This is an uncharacterized protein from Bacillus subtilis (strain 168).